A 317-amino-acid polypeptide reads, in one-letter code: Olfactory receptor 5K16 (317 aa).

The Extracellular segment spans residues 1 to 28; the sequence is MEKTNHSLTTQFILVGFSDHPDLKTPLF. N-linked (GlcNAc...) asparagine glycosylation is present at Asn5. A helical transmembrane segment spans residues 29-49; it reads LLFSVIYLVTMVGNLGLVAVI. Residues 50-56 are Cytoplasmic-facing; the sequence is YLEPRLH. A helical transmembrane segment spans residues 57–77; the sequence is TPMYIFLGNLALMDSCCSCAI. Residues 78–93 are Extracellular-facing; it reads TPKILENFFSVDRRIS. Residues 94–114 traverse the membrane as a helical segment; that stretch reads LYECMAQFYFLCLAETADCFL. Residues Cys97 and Cys189 are joined by a disulfide bond. Over 115-144 the chain is Cytoplasmic; it reads LAAMAYDRYVAICNPLQYHSMMSKKLSIQM. A helical membrane pass occupies residues 145 to 165; the sequence is SIGTFITSNLHSLIHVGCLLR. Topologically, residues 166-198 are extracellular; the sequence is LTFCKSNRIDHFFCDILPLYRLSCTDPFINELM. The helical transmembrane segment at 199-219 threads the bilayer; that stretch reads IYIFSMPIQVFTITTVLVSYF. Over 220-239 the chain is Cytoplasmic; it reads CILLTIFKMKSKDGRGKAFS. A helical membrane pass occupies residues 240–259; sequence TCASHFFSVSIFYVCLLMYI. Over 260-268 the chain is Extracellular; the sequence is RPFDEGNKD. A helical transmembrane segment spans residues 269 to 289; the sequence is IPVAVFYTIIIPLLNPFIYSL. At 290–317 the chain is on the cytoplasmic side; sequence RNKEVVNAVKKVMKTHSIFKNASASMAR.

The protein belongs to the G-protein coupled receptor 1 family.

It localises to the cell membrane. In terms of biological role, potential odorant receptor. The polypeptide is Olfactory receptor 5K16 (Mus musculus (Mouse)).